The sequence spans 432 residues: Adenylosuccinate synthetase (432 aa).

GTP-binding positions include 13–19 (GDEGKGK) and 41–43 (GHT). Asp14 acts as the Proton acceptor in catalysis. Mg(2+) is bound by residues Asp14 and Gly41. IMP is bound by residues 14 to 17 (DEGK), 39 to 42 (NAGH), Thr131, Arg145, Gln226, Thr241, and Arg305. Catalysis depends on His42, which acts as the Proton donor. Substrate is bound at residue 301-307 (SVTGRAR). GTP contacts are provided by residues Arg307, 333-335 (KLD), and 416-418 (STG).

The protein belongs to the adenylosuccinate synthetase family. As to quaternary structure, homodimer. It depends on Mg(2+) as a cofactor.

The protein resides in the cytoplasm. It carries out the reaction IMP + L-aspartate + GTP = N(6)-(1,2-dicarboxyethyl)-AMP + GDP + phosphate + 2 H(+). Its pathway is purine metabolism; AMP biosynthesis via de novo pathway; AMP from IMP: step 1/2. Plays an important role in the de novo pathway of purine nucleotide biosynthesis. Catalyzes the first committed step in the biosynthesis of AMP from IMP. In Neisseria gonorrhoeae (strain ATCC 700825 / FA 1090), this protein is Adenylosuccinate synthetase.